We begin with the raw amino-acid sequence, 143 residues long: UPF0179 protein PTO0851 (143 aa).

The protein belongs to the UPF0179 family.

The protein is UPF0179 protein PTO0851 of Picrophilus torridus (strain ATCC 700027 / DSM 9790 / JCM 10055 / NBRC 100828 / KAW 2/3).